The following is a 319-amino-acid chain: Methionyl-tRNA formyltransferase (319 aa).

Residue 112 to 115 (SILP) participates in (6S)-5,6,7,8-tetrahydrofolate binding.

This sequence belongs to the Fmt family.

The catalysed reaction is L-methionyl-tRNA(fMet) + (6R)-10-formyltetrahydrofolate = N-formyl-L-methionyl-tRNA(fMet) + (6S)-5,6,7,8-tetrahydrofolate + H(+). Functionally, attaches a formyl group to the free amino group of methionyl-tRNA(fMet). The formyl group appears to play a dual role in the initiator identity of N-formylmethionyl-tRNA by promoting its recognition by IF2 and preventing the misappropriation of this tRNA by the elongation apparatus. This is Methionyl-tRNA formyltransferase from Shewanella denitrificans (strain OS217 / ATCC BAA-1090 / DSM 15013).